Consider the following 217-residue polypeptide: Meiotic expression up-regulated protein 29 (217 aa).

The signal sequence occupies residues Met1–Ala21. The Extracellular segment spans residues Tyr22–Lys133. The N-linked (GlcNAc...) asparagine glycan is linked to Asn84. Residues Leu134–Ala154 form a helical membrane-spanning segment. Topologically, residues Thr155–Val217 are cytoplasmic.

It is found in the membrane. The polypeptide is Meiotic expression up-regulated protein 29 (meu29) (Schizosaccharomyces pombe (strain 972 / ATCC 24843) (Fission yeast)).